We begin with the raw amino-acid sequence, 100 residues long: Urease subunit gamma (100 aa).

This sequence belongs to the urease gamma subunit family. In terms of assembly, heterotrimer of UreA (gamma), UreB (beta) and UreC (alpha) subunits. Three heterotrimers associate to form the active enzyme.

It is found in the cytoplasm. The enzyme catalyses urea + 2 H2O + H(+) = hydrogencarbonate + 2 NH4(+). Its pathway is nitrogen metabolism; urea degradation; CO(2) and NH(3) from urea (urease route): step 1/1. This Pseudarthrobacter chlorophenolicus (strain ATCC 700700 / DSM 12829 / CIP 107037 / JCM 12360 / KCTC 9906 / NCIMB 13794 / A6) (Arthrobacter chlorophenolicus) protein is Urease subunit gamma.